An 83-amino-acid chain; its full sequence is Cytochrome b559 subunit alpha (83 aa).

A helical membrane pass occupies residues 21–35; sequence VIHSITIPSLFIAGW. Histidine 23 contacts heme.

This sequence belongs to the PsbE/PsbF family. Heterodimer of an alpha subunit and a beta subunit. PSII is composed of 1 copy each of membrane proteins PsbA, PsbB, PsbC, PsbD, PsbE, PsbF, PsbH, PsbI, PsbJ, PsbK, PsbL, PsbM, PsbT, PsbX, PsbY, PsbZ, Psb30/Ycf12, at least 3 peripheral proteins of the oxygen-evolving complex and a large number of cofactors. It forms dimeric complexes. Requires heme b as cofactor.

It is found in the plastid. The protein localises to the chloroplast thylakoid membrane. In terms of biological role, this b-type cytochrome is tightly associated with the reaction center of photosystem II (PSII). PSII is a light-driven water:plastoquinone oxidoreductase that uses light energy to abstract electrons from H(2)O, generating O(2) and a proton gradient subsequently used for ATP formation. It consists of a core antenna complex that captures photons, and an electron transfer chain that converts photonic excitation into a charge separation. This is Cytochrome b559 subunit alpha from Amborella trichopoda.